The sequence spans 188 residues: Acireductone dioxygenase (188 aa).

The segment at 1–20 (MSRLRIFADSNPTTPHFDSR) is disordered. Positions 97, 99, 103, and 141 each coordinate Fe(2+). Ni(2+)-binding residues include H97, H99, E103, and H141.

The protein belongs to the acireductone dioxygenase (ARD) family. In terms of assembly, monomer. Fe(2+) serves as cofactor. Ni(2+) is required as a cofactor.

The enzyme catalyses 1,2-dihydroxy-5-(methylsulfanyl)pent-1-en-3-one + O2 = 3-(methylsulfanyl)propanoate + CO + formate + 2 H(+). It carries out the reaction 1,2-dihydroxy-5-(methylsulfanyl)pent-1-en-3-one + O2 = 4-methylsulfanyl-2-oxobutanoate + formate + 2 H(+). The protein operates within amino-acid biosynthesis; L-methionine biosynthesis via salvage pathway; L-methionine from S-methyl-5-thio-alpha-D-ribose 1-phosphate: step 5/6. Functionally, catalyzes 2 different reactions between oxygen and the acireductone 1,2-dihydroxy-3-keto-5-methylthiopentene (DHK-MTPene) depending upon the metal bound in the active site. Fe-containing acireductone dioxygenase (Fe-ARD) produces formate and 2-keto-4-methylthiobutyrate (KMTB), the alpha-ketoacid precursor of methionine in the methionine recycle pathway. Ni-containing acireductone dioxygenase (Ni-ARD) produces methylthiopropionate, carbon monoxide and formate, and does not lie on the methionine recycle pathway. The chain is Acireductone dioxygenase from Xanthomonas campestris pv. campestris (strain 8004).